We begin with the raw amino-acid sequence, 576 residues long: Septation ring formation regulator EzrA (576 aa).

The Extracellular portion of the chain corresponds to 1-7; the sequence is MSSTVII. Residues 8–26 form a helical membrane-spanning segment; the sequence is LIVVLLVILVAFYAFAILM. At 27 to 576 the chain is on the cytoplasmic side; that stretch reads RKKTEDRILA…FKNKPTPDYL (550 aa). Coiled-coil stretches lie at residues 105 to 134, 254 to 305, and 356 to 402; these read RARESVADSEAQIEMMEGDVEGIRQGVAQL, ENVN…FERE, and GYQE…IEKN.

It belongs to the EzrA family.

The protein localises to the cell membrane. Negative regulator of FtsZ ring formation; modulates the frequency and position of FtsZ ring formation. Inhibits FtsZ ring formation at polar sites. Interacts either with FtsZ or with one of its binding partners to promote depolymerization. This chain is Septation ring formation regulator EzrA, found in Lactococcus lactis subsp. cremoris (strain MG1363).